A 525-amino-acid chain; its full sequence is tRNA-splicing endonuclease subunit Sen54 (525 aa).

Met1 carries the N-acetylmethionine modification. The disordered stretch occupies residues 1-46 (MEPEPEPGSVEVPAGRVLSASELRAARSRSQKLPQRSHGPKDFLPD). Low complexity predominate over residues 7–23 (PGSVEVPAGRVLSASEL). Residue Ser178 is modified to Phosphoserine. Tyr180 bears the Phosphotyrosine mark. Low complexity predominate over residues 220–232 (LPPVSLAASSSPA). Positions 220–273 (LPPVSLAASSSPACDQSSQYPEEKSQDSSPRQGSELPLQFLGSSEPCSDLARED) are disordered.

This sequence belongs to the SEN54 family. As to quaternary structure, tRNA splicing endonuclease is a heterotetramer composed of TSEN2, TSEN15, TSEN34/LENG5 and TSEN54. tRNA splicing endonuclease complex also contains proteins of the pre-mRNA 3'-end processing machinery such as CLP1, CPSF1, CPSF4 and CSTF2.

It localises to the nucleus. The protein resides in the nucleolus. In terms of biological role, non-catalytic subunit of the tRNA-splicing endonuclease complex, a complex responsible for identification and cleavage of the splice sites in pre-tRNA. It cleaves pre-tRNA at the 5' and 3' splice sites to release the intron. The products are an intron and two tRNA half-molecules bearing 2',3' cyclic phosphate and 5'-OH termini. There are no conserved sequences at the splice sites, but the intron is invariably located at the same site in the gene, placing the splice sites an invariant distance from the constant structural features of the tRNA body. The tRNA splicing endonuclease is also involved in mRNA processing via its association with pre-mRNA 3'-end processing factors, establishing a link between pre-tRNA splicing and pre-mRNA 3'-end formation, suggesting that the endonuclease subunits function in multiple RNA-processing events. In Mus musculus (Mouse), this protein is tRNA-splicing endonuclease subunit Sen54 (Tsen54).